Reading from the N-terminus, the 379-residue chain is Carbamoyl phosphate synthase small chain (379 aa).

Residues 1–188 (MSTPAILALA…ELGKGFTQPE (188 aa)) are CPSase. L-glutamine is bound by residues Ser-47, Gly-240, and Gly-242. The Glutamine amidotransferase type-1 domain occupies 192–379 (HVVAYDYGVK…FIELIEAAKK (188 aa)). The Nucleophile role is filled by Cys-269. Residues Leu-270, Gln-273, Asn-311, Gly-313, and Phe-314 each coordinate L-glutamine. Residues His-353 and Glu-355 contribute to the active site.

The protein belongs to the CarA family. Composed of two chains; the small (or glutamine) chain promotes the hydrolysis of glutamine to ammonia, which is used by the large (or ammonia) chain to synthesize carbamoyl phosphate. Tetramer of heterodimers (alpha,beta)4.

The catalysed reaction is hydrogencarbonate + L-glutamine + 2 ATP + H2O = carbamoyl phosphate + L-glutamate + 2 ADP + phosphate + 2 H(+). It carries out the reaction L-glutamine + H2O = L-glutamate + NH4(+). It participates in amino-acid biosynthesis; L-arginine biosynthesis; carbamoyl phosphate from bicarbonate: step 1/1. Its pathway is pyrimidine metabolism; UMP biosynthesis via de novo pathway; (S)-dihydroorotate from bicarbonate: step 1/3. Its function is as follows. Small subunit of the glutamine-dependent carbamoyl phosphate synthetase (CPSase). CPSase catalyzes the formation of carbamoyl phosphate from the ammonia moiety of glutamine, carbonate, and phosphate donated by ATP, constituting the first step of 2 biosynthetic pathways, one leading to arginine and/or urea and the other to pyrimidine nucleotides. The small subunit (glutamine amidotransferase) binds and cleaves glutamine to supply the large subunit with the substrate ammonia. The sequence is that of Carbamoyl phosphate synthase small chain from Acinetobacter baylyi (strain ATCC 33305 / BD413 / ADP1).